A 287-amino-acid chain; its full sequence is Protease HtpX (287 aa).

The next 2 helical transmembrane spans lie at 4 to 24 and 37 to 57; these read VLLF…VFNI and VGLL…SLWI. Histidine 143 is a Zn(2+) binding site. Residue glutamate 144 is part of the active site. Residue histidine 147 participates in Zn(2+) binding. The next 2 membrane-spanning stretches (helical) occupy residues 158–178 and 194–214; these read LIQG…ASAI and GVVM…VMWF. Glutamate 219 provides a ligand contact to Zn(2+).

The protein belongs to the peptidase M48B family. It depends on Zn(2+) as a cofactor.

It is found in the cell inner membrane. The chain is Protease HtpX from Idiomarina loihiensis (strain ATCC BAA-735 / DSM 15497 / L2-TR).